Reading from the N-terminus, the 423-residue chain is Gamma-glutamyl phosphate reductase (423 aa).

The protein belongs to the gamma-glutamyl phosphate reductase family.

It is found in the cytoplasm. It catalyses the reaction L-glutamate 5-semialdehyde + phosphate + NADP(+) = L-glutamyl 5-phosphate + NADPH + H(+). It functions in the pathway amino-acid biosynthesis; L-proline biosynthesis; L-glutamate 5-semialdehyde from L-glutamate: step 2/2. Catalyzes the NADPH-dependent reduction of L-glutamate 5-phosphate into L-glutamate 5-semialdehyde and phosphate. The product spontaneously undergoes cyclization to form 1-pyrroline-5-carboxylate. This chain is Gamma-glutamyl phosphate reductase, found in Roseiflexus castenholzii (strain DSM 13941 / HLO8).